A 57-amino-acid polypeptide reads, in one-letter code: Large ribosomal subunit protein bL32c (57 aa).

Belongs to the bacterial ribosomal protein bL32 family.

It is found in the plastid. It localises to the chloroplast. This is Large ribosomal subunit protein bL32c from Acorus calamus (Sweet flag).